Here is a 686-residue protein sequence, read N- to C-terminus: Translation initiation factor IF-2 (686 aa).

Positions 54-105 are disordered; the sequence is KPSVADEFEVEEKVVRSKKNSNKKKKKGKGNEDKRQENFAGRQQTQTVETPD. Residues 69–81 are compositionally biased toward basic residues; it reads RSKKNSNKKKKKG. A tr-type G domain is found at 188–357; it reads ERPAVVTIMG…LLISEVEEYK (170 aa). The interval 197 to 204 is G1; it reads GHVDHGKT. 197 to 204 is a GTP binding site; that stretch reads GHVDHGKT. Residues 222-226 are G2; the sequence is GITQH. The tract at residues 243–246 is G3; sequence DTPG. Residues 243-247 and 297-300 contribute to the GTP site; these read DTPGH and NKMD. The tract at residues 297–300 is G4; the sequence is NKMD. Residues 333–335 form a G5 region; that stretch reads SAI.

This sequence belongs to the TRAFAC class translation factor GTPase superfamily. Classic translation factor GTPase family. IF-2 subfamily.

Its subcellular location is the cytoplasm. In terms of biological role, one of the essential components for the initiation of protein synthesis. Protects formylmethionyl-tRNA from spontaneous hydrolysis and promotes its binding to the 30S ribosomal subunits. Also involved in the hydrolysis of GTP during the formation of the 70S ribosomal complex. This chain is Translation initiation factor IF-2, found in Bacillus anthracis (strain A0248).